The sequence spans 310 residues: Tyrosine recombinase XerC (310 aa).

A Core-binding (CB) domain is found at 22–103; it reads SQMLEAIEDF…SVKSFSTWAV (82 aa). In terms of domain architecture, Tyr recombinase spans 124-304; sequence NLPRVLGEVQ…SSQRLLEAFR (181 aa). Catalysis depends on residues arginine 165, lysine 189, histidine 256, arginine 259, and histidine 282. Tyrosine 291 acts as the O-(3'-phospho-DNA)-tyrosine intermediate in catalysis.

It belongs to the 'phage' integrase family. XerC subfamily. As to quaternary structure, forms a cyclic heterotetrameric complex composed of two molecules of XerC and two molecules of XerD.

The protein resides in the cytoplasm. Functionally, site-specific tyrosine recombinase, which acts by catalyzing the cutting and rejoining of the recombining DNA molecules. The XerC-XerD complex is essential to convert dimers of the bacterial chromosome into monomers to permit their segregation at cell division. It also contributes to the segregational stability of plasmids. This Corynebacterium efficiens (strain DSM 44549 / YS-314 / AJ 12310 / JCM 11189 / NBRC 100395) protein is Tyrosine recombinase XerC.